The following is a 209-amino-acid chain: PRA1 family protein A3 (209 aa).

The next 4 membrane-spanning stretches (helical) occupy residues 51–72 (LYYY…ALIT), 76–98 (AILG…AATF), 143–163 (LVFV…SCGL), and 164–184 (LWVL…ASLR).

It belongs to the PRA1 family.

It localises to the endosome membrane. May be involved in both secretory and endocytic intracellular trafficking in the endosomal/prevacuolar compartments. The polypeptide is PRA1 family protein A3 (PRA1A3) (Arabidopsis thaliana (Mouse-ear cress)).